The primary structure comprises 344 residues: Putative NAD(P)H nitroreductase MT3217 (344 aa).

FMN-binding positions include 40-44 and Arg326; that span reads QPWRW.

It belongs to the nitroreductase family. Interacts with human TLR2. FMN serves as cofactor.

Stimulates pro-inflammatory cytokine expression via TLR2 signaling pathway. Activation of TLR2 results in the phosphorylation and activation of NF-kappa-B. Also induces TLR2 expression. May influence the innate immune responses to facilitate the survival of M.tuberculosis in the granulomatous microenvironment. In Mycobacterium tuberculosis (strain CDC 1551 / Oshkosh), this protein is Putative NAD(P)H nitroreductase MT3217.